A 491-amino-acid chain; its full sequence is Ketol-acid reductoisomerase (NADP(+)) (491 aa).

A KARI N-terminal Rossmann domain is found at 15–208 (AQLGKCRFMG…GGHRAGVLES (194 aa)). NADP(+) contacts are provided by residues 45–48 (CGAQ), Arg68, Arg76, Ser78, and 108–110 (DKQ). His132 is a catalytic residue. Gly158 is an NADP(+) binding site. KARI C-terminal knotted domains are found at residues 209-344 (SFVA…TAPQ) and 345-484 (YEGK…MTDM). Mg(2+) is bound by residues Asp217, Glu221, Glu389, and Glu393. Substrate is bound at residue Ser414.

The protein belongs to the ketol-acid reductoisomerase family. Mg(2+) serves as cofactor.

The enzyme catalyses (2R)-2,3-dihydroxy-3-methylbutanoate + NADP(+) = (2S)-2-acetolactate + NADPH + H(+). It catalyses the reaction (2R,3R)-2,3-dihydroxy-3-methylpentanoate + NADP(+) = (S)-2-ethyl-2-hydroxy-3-oxobutanoate + NADPH + H(+). The protein operates within amino-acid biosynthesis; L-isoleucine biosynthesis; L-isoleucine from 2-oxobutanoate: step 2/4. It participates in amino-acid biosynthesis; L-valine biosynthesis; L-valine from pyruvate: step 2/4. Functionally, involved in the biosynthesis of branched-chain amino acids (BCAA). Catalyzes an alkyl-migration followed by a ketol-acid reduction of (S)-2-acetolactate (S2AL) to yield (R)-2,3-dihydroxy-isovalerate. In the isomerase reaction, S2AL is rearranged via a Mg-dependent methyl migration to produce 3-hydroxy-3-methyl-2-ketobutyrate (HMKB). In the reductase reaction, this 2-ketoacid undergoes a metal-dependent reduction by NADPH to yield (R)-2,3-dihydroxy-isovalerate. In Escherichia coli O7:K1 (strain IAI39 / ExPEC), this protein is Ketol-acid reductoisomerase (NADP(+)).